Consider the following 543-residue polypeptide: CTP synthase (543 aa).

Residues 1–267 are amidoligase domain; sequence MKQTKYIFVT…LSPIAEILDL (267 aa). Serine 15 is a binding site for CTP. Serine 15 contributes to the UTP binding site. ATP-binding positions include 16-21 and aspartate 73; that span reads SLGKGI. Positions 73 and 141 each coordinate Mg(2+). CTP contacts are provided by residues 148–150, 188–193, and lysine 224; these read DIE and KTKPTQ. UTP-binding positions include 188 to 193 and lysine 224; that span reads KTKPTQ. The region spanning 292-543 is the Glutamine amidotransferase type-1 domain; the sequence is KIAFVGKYVD…IKAAINYEDN (252 aa). Glycine 354 is an L-glutamine binding site. The active-site Nucleophile; for glutamine hydrolysis is the cysteine 381. L-glutamine contacts are provided by residues 382-385, glutamate 405, and arginine 473; that span reads LGMQ. Residues histidine 516 and glutamate 518 contribute to the active site.

The protein belongs to the CTP synthase family. As to quaternary structure, homotetramer.

The enzyme catalyses UTP + L-glutamine + ATP + H2O = CTP + L-glutamate + ADP + phosphate + 2 H(+). It catalyses the reaction L-glutamine + H2O = L-glutamate + NH4(+). It carries out the reaction UTP + NH4(+) + ATP = CTP + ADP + phosphate + 2 H(+). It participates in pyrimidine metabolism; CTP biosynthesis via de novo pathway; CTP from UDP: step 2/2. Allosterically activated by GTP, when glutamine is the substrate; GTP has no effect on the reaction when ammonia is the substrate. The allosteric effector GTP functions by stabilizing the protein conformation that binds the tetrahedral intermediate(s) formed during glutamine hydrolysis. Inhibited by the product CTP, via allosteric rather than competitive inhibition. Its function is as follows. Catalyzes the ATP-dependent amination of UTP to CTP with either L-glutamine or ammonia as the source of nitrogen. Regulates intracellular CTP levels through interactions with the four ribonucleotide triphosphates. This Campylobacter jejuni subsp. jejuni serotype O:6 (strain 81116 / NCTC 11828) protein is CTP synthase.